The following is a 660-amino-acid chain: Oligopeptide-binding protein AliA (660 aa).

The N-terminal stretch at 1–22 (MKSSKLFALAGVTLLAATTLAA) is a signal peptide. Cysteine 23 is lipidated: N-palmitoyl cysteine. The S-diacylglycerol cysteine moiety is linked to residue cysteine 23. The segment at 638-660 (EKWMKEKEESNKKAQEDLAKHVK) is disordered.

Belongs to the bacterial solute-binding protein 5 family.

The protein resides in the cell membrane. Functionally, part of the binding-protein-dependent transport system for oligopeptides; probably an oligopeptide binding protein. The chain is Oligopeptide-binding protein AliA (aliA) from Streptococcus pneumoniae serotype 4 (strain ATCC BAA-334 / TIGR4).